Consider the following 508-residue polypeptide: MSGDDDWWTSSNEALLVSLVTPSDTGVKTLDTFHPEYTNNIFGEKEQIFGYKGLRINLQYNASDMLPNLKVSYKKKYQPTADEEALDINEVLSEFLPEIAFQKQSDFETRLKSIPDNWTPPGTLVTSFTNKDGEYEVYSGKITDPAVKQLLNRIQILVPFFVDGGTPIDMEDPDVDRWTIYFLYNKRPLLNQPDKFSYHFAGYSTLYRYYAFQPPAESESKTPTDTPTFSVDGDFDLDTLPCRTRISQFIIIPPFQQKGLGSRLYSIIYQQYLKHEPTIELTVEDPNEAFDDMRDLADLAFLSKQPEFQALKIDTSVEIPEEGKAPSNIVDQAAWEACRKKFKIVPRQFARVLEMYLMSQLPESVRPGLGAPEDEDYEEQSGRSKSKGHEKALPKPTPEDEHTYRLWMMLVKRRLYVHNRDALGQLELKERREELAKVFAGVEFDYARLLIKAEEQGKLAQADGETAGDQVPATPSAANGKRKLDEVEQAEGTAAASSKKAKVESGHA.

Interaction with histone H4 N-terminus regions lie at residues 44 to 46 (EKE) and 207 to 209 (YRY). Residues 249 to 251 (FII) and 256 to 262 (QQKGLGS) contribute to the acetyl-CoA site. Glu-284 functions as the Proton donor/acceptor in the catalytic mechanism. Disordered stretches follow at residues 364–399 (SVRPGLGAPEDEDYEEQSGRSKSKGHEKALPKPTPE) and 461–508 (QADG…SGHA). A compositionally biased stretch (basic and acidic residues) spans 387–399 (KGHEKALPKPTPE).

The protein belongs to the HAT1 family. Component of the HAT-B complex composed of at least hat-1 and hat-2. The HAT-B complex binds to histone H4 tail.

The protein resides in the cytoplasm. Its subcellular location is the nucleus. It catalyses the reaction L-lysyl-[protein] + acetyl-CoA = N(6)-acetyl-L-lysyl-[protein] + CoA + H(+). Its function is as follows. Catalytic component of the histone acetylase B (HAT-B) complex. Acetylates 'Lys-12' of histone H4 which is required for telomeric silencing. Has intrinsic substrate specificity that modifies lysine in recognition sequence GXGKXG. Involved in DNA double-strand break repair. This chain is Histone acetyltransferase type B catalytic subunit (hat-1), found in Neurospora crassa (strain ATCC 24698 / 74-OR23-1A / CBS 708.71 / DSM 1257 / FGSC 987).